The primary structure comprises 118 residues: Small ribosomal subunit protein uS13 (118 aa).

The disordered stretch occupies residues 94-118; the sequence is GLPVRGQRTKTNARTRKGPRKPIKK.

Belongs to the universal ribosomal protein uS13 family. As to quaternary structure, part of the 30S ribosomal subunit. Forms a loose heterodimer with protein S19. Forms two bridges to the 50S subunit in the 70S ribosome.

Located at the top of the head of the 30S subunit, it contacts several helices of the 16S rRNA. In the 70S ribosome it contacts the 23S rRNA (bridge B1a) and protein L5 of the 50S subunit (bridge B1b), connecting the 2 subunits; these bridges are implicated in subunit movement. Contacts the tRNAs in the A and P-sites. The polypeptide is Small ribosomal subunit protein uS13 (Haemophilus ducreyi (strain 35000HP / ATCC 700724)).